The following is a 300-amino-acid chain: Jacalin-related lectin 32 (300 aa).

Ala2 is subject to N-acetylalanine. Jacalin-type lectin domains lie at 2–146 and 154–297; these read AQKV…YFTT and AKKL…HILP.

The protein belongs to the jacalin lectin family.

Involved in gametophytic development. This chain is Jacalin-related lectin 32 (JAL32), found in Arabidopsis thaliana (Mouse-ear cress).